Consider the following 173-residue polypeptide: Lipoprotein signal peptidase (173 aa).

A run of 4 helical transmembrane segments spans residues 7–27 (FFWF…LWVV), 41–61 (LWPG…FSLF), 70–90 (WLSL…PNFN), and 95–115 (AGYG…FVAG). Catalysis depends on residues D119 and D135. A helical transmembrane segment spans residues 130-150 (IFNLADVFINIGIICLLIAAW).

The protein belongs to the peptidase A8 family.

It localises to the cell inner membrane. The enzyme catalyses Release of signal peptides from bacterial membrane prolipoproteins. Hydrolyzes -Xaa-Yaa-Zaa-|-(S,diacylglyceryl)Cys-, in which Xaa is hydrophobic (preferably Leu), and Yaa (Ala or Ser) and Zaa (Gly or Ala) have small, neutral side chains.. The protein operates within protein modification; lipoprotein biosynthesis (signal peptide cleavage). Functionally, this protein specifically catalyzes the removal of signal peptides from prolipoproteins. This is Lipoprotein signal peptidase from Cyanothece sp. (strain PCC 7425 / ATCC 29141).